A 213-amino-acid chain; its full sequence is MAKNYYDITLALAGICQSARLVQQLAHQGHCDADALHVSLNSIIDMNPSSTLAVFGGSEANLRVGLETLLGVLNASSRQGLNAELTRYTLSLMVLERKLSSAKGALDTLGNRINGLQRQLEHFDLQSETLMSAMAAIYVDVISPLGPRIQVTGSPAVLQSPQVQAKVRATLLAGIRAAVLWHQVGGGRLQLMFSRNRLTTQAKQILAHLTPEL.

Positions 79-126 (QGLNAELTRYTLSLMVLERKLSSAKGALDTLGNRINGLQRQLEHFDLQ) form a coiled coil.

It belongs to the HflD family.

It is found in the cytoplasm. Its subcellular location is the cell inner membrane. The chain is High frequency lysogenization protein HflD homolog from Shigella dysenteriae serotype 1 (strain Sd197).